The following is a 176-amino-acid chain: Phosphopantetheine adenylyltransferase (176 aa).

Residue serine 8 coordinates substrate. ATP is bound by residues serine 8–phenylalanine 9 and histidine 16. Residues lysine 40, threonine 72, and arginine 86 each coordinate substrate. ATP-binding positions include glycine 87 to arginine 89, glutamate 97, and tyrosine 122 to serine 128.

It belongs to the bacterial CoaD family. In terms of assembly, homohexamer. Mg(2+) is required as a cofactor.

Its subcellular location is the cytoplasm. It catalyses the reaction (R)-4'-phosphopantetheine + ATP + H(+) = 3'-dephospho-CoA + diphosphate. The protein operates within cofactor biosynthesis; coenzyme A biosynthesis; CoA from (R)-pantothenate: step 4/5. Functionally, reversibly transfers an adenylyl group from ATP to 4'-phosphopantetheine, yielding dephospho-CoA (dPCoA) and pyrophosphate. The protein is Phosphopantetheine adenylyltransferase of Acaryochloris marina (strain MBIC 11017).